Consider the following 414-residue polypeptide: Schlafen-like protein 1 (414 aa).

Residues 141 to 203 (LHHREQDDSG…ISQNRPSGVR (63 aa)) form a disordered region. Positions 154-185 (SHSPGPSPGPSPGPSPGFRRPPLPQLADPPPN) are enriched in pro residues. ATP is bound at residue 268-275 (GVEDSGLV). A coiled-coil region spans residues 373-407 (RQKWTAELSKLEEKVDVLTLEKEQLQEQLRQRQTL).

It belongs to the Schlafen family. Subgroup I subfamily.

In Rattus norvegicus (Rat), this protein is Schlafen-like protein 1 (Slfnl1).